Reading from the N-terminus, the 547-residue chain is Chaperonin GroEL (547 aa).

ATP-binding positions include 30–33, K51, 87–91, G415, 479–481, and D495; these read TLGP, DGTTT, and NAA. A disordered region spans residues 525 to 547; it reads PKEDKPDLGGGNPGGAGGMGGMM. A compositionally biased stretch (gly residues) spans 532-547; it reads LGGGNPGGAGGMGGMM.

This sequence belongs to the chaperonin (HSP60) family. As to quaternary structure, forms a cylinder of 14 subunits composed of two heptameric rings stacked back-to-back. Interacts with the co-chaperonin GroES.

Its subcellular location is the cytoplasm. It catalyses the reaction ATP + H2O + a folded polypeptide = ADP + phosphate + an unfolded polypeptide.. Together with its co-chaperonin GroES, plays an essential role in assisting protein folding. The GroEL-GroES system forms a nano-cage that allows encapsulation of the non-native substrate proteins and provides a physical environment optimized to promote and accelerate protein folding. This chain is Chaperonin GroEL, found in Blochmanniella floridana.